A 218-amino-acid polypeptide reads, in one-letter code: DNA-binding protein HU 2 (218 aa).

The interval 1 to 91 is bacterial histone-like domain; sequence MNKAQLVEAI…QGFKDLVSGS (91 aa). Residues 101 to 218 are disordered; the sequence is VKKAPKGSLS…TAKKATARKK (118 aa). The segment at 118-218 is degenerate repeats region; that stretch reads KAAGKKAAAK…TAKKATARKK (101 aa). Residues 127–161 show a composition bias toward low complexity; it reads KKATGAAKKTTGAAKKTSAAAKKTTAKKTTGAAKT. Positions 162–172 are enriched in basic residues; that stretch reads TAKKTTAKKSA. The segment covering 173–182 has biased composition (low complexity); that stretch reads AKTTTAAAKK. Residues 183-218 are compositionally biased toward basic residues; sequence TAAKKAPAKKATAKKAPAKKSTARKTTAKKATARKK.

This sequence belongs to the bacterial histone-like protein family. Long actinobacterial subfamily. As to quaternary structure, homodimer.

Its subcellular location is the cytoplasm. It is found in the nucleoid. In terms of biological role, histone-like DNA-binding protein which is capable of wrapping DNA to stabilize it, and thus to prevent its denaturation under extreme environmental conditions. The polypeptide is DNA-binding protein HU 2 (hup2) (Streptomyces coelicolor (strain ATCC BAA-471 / A3(2) / M145)).